Consider the following 1893-residue polypeptide: Serine-aspartate repeat-containing protein I (1893 aa).

The signal sequence occupies residues 1–54 (MNFKGVKLLKNSKKRLDFLPNTLNKYSIRKFTVGTASILVGATLFLGVSNEAEA). Residues 53–333 (EAAEKIDSPT…AHGINNKNKQ (281 aa)) are disordered. Basic and acidic residues predominate over residues 54 to 222 (AAEKIDSPTK…AEEPATKEEA (169 aa)). A run of 21 repeats spans residues 72–83 (AATKEEAATTEE), 84–95 (PATKEEAATTEE), 96–107 (PATKEEAAIAEE), 108–119 (PATKEEAATTEE), 120–131 (PATKEEAAIAEE), 132–143 (PATKEEAATTEE), 144–155 (PATKEEAATTEE), 156–167 (PATKEEAAIAEE), 168–179 (PATKEEAATTEE), 180–191 (PATKEEAAIAEE), 192–203 (PATKEEAVTSEE), 204–215 (AATKEKAAIAEE), 216–227 (PATKEEAAIAEE), 228–239 (PETKEEAATTEE), 240–251 (PATKEEAAIAEE), 252–263 (AATKEKAVTSEE), 264–275 (AATKEKAAIAEE), 276–287 (AATKEKAAIAEE), 288–299 (PETKEEAATTEE), 300–311 (PETKEEAAIAEE), and 312–323 (PATKEKAVTSEE). Residues 72–323 (AATKEEAATT…TKEKAVTSEE (252 aa)) form a 21 X 12 AA tandem repeat of [AP]-[AE]-T-K-E-[EK]-A-[AV]-[IT]-[AST]-E-E region. Positions 240-284 (PATKEEAAIAEEAATKEKAVTSEEAATKEKAAIAEEAATKEKAAI) are enriched in basic and acidic residues. Positions 286–302 (EEPETKEEAATTEEPET) are enriched in acidic residues. A compositionally biased stretch (basic and acidic residues) spans 312 to 325 (PATKEKAVTSEEAH). Residues 324-755 (AHGINNKNKQ…GSSTAQGDNP (432 aa)) form a ligand binding A region region. 2 consecutive CNA-B domains span residues 756–874 (TYNL…YETP) and 875–984 (KYSL…YFDE). The disordered stretch occupies residues 941 to 1867 (KPEGLTQTTT…GNNTQNNGTL (927 aa)). Residues 955 to 975 (DENKDADGEEVHVTITDHDDF) are compositionally biased toward basic and acidic residues. Over residues 981 to 1836 (YFDEDSDADA…DSDADADADS (856 aa)) the composition is skewed to acidic residues. Over residues 1837-1851 (DADKYHNDTADKSND) the composition is skewed to basic and acidic residues. The LPXTG sorting signal motif lies at 1854 to 1858 (LPDTG). Threonine 1857 carries the pentaglycyl murein peptidoglycan amidated threonine modification. A propeptide spans 1858-1893 (GNNTQNNGTLFGSLFAALGGLFLVGSRRKNKNNEEK) (removed by sortase).

It belongs to the serine-aspartate repeat-containing protein (SDr) family.

The protein resides in the secreted. Its subcellular location is the cell wall. Functionally, responsible for collagen binding by S.saprophyticus. The protein is Serine-aspartate repeat-containing protein I (sdrI) of Staphylococcus saprophyticus.